A 475-amino-acid polypeptide reads, in one-letter code: Alpha,alpha-trehalose-phosphate synthase [UDP-forming] (475 aa).

Residues Tyr-93 and Asp-147 each coordinate D-glucose 6-phosphate. Residues Arg-285 and Lys-290 each contribute to the UDP site. UDP-alpha-D-glucose-binding residues include Arg-285 and Lys-290. Arg-323 contributes to the D-glucose 6-phosphate binding site. Asp-384–Glu-392 provides a ligand contact to UDP-alpha-D-glucose. Leu-388–Glu-392 is a UDP binding site.

This sequence belongs to the glycosyltransferase 20 family.

It catalyses the reaction D-glucose 6-phosphate + UDP-alpha-D-glucose = alpha,alpha-trehalose 6-phosphate + UDP + H(+). It participates in carbohydrate biosynthesis. In terms of biological role, synthase catalytic subunit of the trehalose synthase complex that catalyzes the production of trehalose from glucose-6-phosphate and UDP-alpha-D-glucose in a two step process. This is Alpha,alpha-trehalose-phosphate synthase [UDP-forming] from Pichia angusta (Yeast).